The following is a 247-amino-acid chain: DNA repair protein RecO (247 aa).

It belongs to the RecO family.

Involved in DNA repair and RecF pathway recombination. The chain is DNA repair protein RecO from Caldanaerobacter subterraneus subsp. tengcongensis (strain DSM 15242 / JCM 11007 / NBRC 100824 / MB4) (Thermoanaerobacter tengcongensis).